We begin with the raw amino-acid sequence, 398 residues long: Tryptophan synthase beta chain (398 aa).

Position 87 is an N6-(pyridoxal phosphate)lysine (K87).

Belongs to the TrpB family. As to quaternary structure, tetramer of two alpha and two beta chains. Requires pyridoxal 5'-phosphate as cofactor.

The catalysed reaction is (1S,2R)-1-C-(indol-3-yl)glycerol 3-phosphate + L-serine = D-glyceraldehyde 3-phosphate + L-tryptophan + H2O. The protein operates within amino-acid biosynthesis; L-tryptophan biosynthesis; L-tryptophan from chorismate: step 5/5. Functionally, the beta subunit is responsible for the synthesis of L-tryptophan from indole and L-serine. This Blochmanniella floridana protein is Tryptophan synthase beta chain.